The following is a 362-amino-acid chain: Phosphoserine aminotransferase (362 aa).

Arg-43 contributes to the L-glutamate binding site. Pyridoxal 5'-phosphate is bound by residues 77–78 (AR), Trp-103, Thr-153, Asp-173, and Gln-196. Lys-197 is modified (N6-(pyridoxal phosphate)lysine).

This sequence belongs to the class-V pyridoxal-phosphate-dependent aminotransferase family. SerC subfamily. In terms of assembly, homodimer. Requires pyridoxal 5'-phosphate as cofactor.

The protein resides in the cytoplasm. The enzyme catalyses O-phospho-L-serine + 2-oxoglutarate = 3-phosphooxypyruvate + L-glutamate. It carries out the reaction 4-(phosphooxy)-L-threonine + 2-oxoglutarate = (R)-3-hydroxy-2-oxo-4-phosphooxybutanoate + L-glutamate. It participates in amino-acid biosynthesis; L-serine biosynthesis; L-serine from 3-phospho-D-glycerate: step 2/3. It functions in the pathway cofactor biosynthesis; pyridoxine 5'-phosphate biosynthesis; pyridoxine 5'-phosphate from D-erythrose 4-phosphate: step 3/5. Its function is as follows. Catalyzes the reversible conversion of 3-phosphohydroxypyruvate to phosphoserine and of 3-hydroxy-2-oxo-4-phosphonooxybutanoate to phosphohydroxythreonine. This Legionella pneumophila (strain Lens) protein is Phosphoserine aminotransferase.